Here is a 330-residue protein sequence, read N- to C-terminus: Embigin (330 aa).

The first 33 residues, 1 to 33, serve as a signal peptide directing secretion; the sequence is MRSHTGLRALVAPGYPLLLLCLLAATRPDPAEG. Residues 34-254 lie on the Extracellular side of the membrane; the sequence is DPTDPTFTSL…QLGESEEQNE (221 aa). 2 Ig-like V-type domains span residues 38-161 and 162-256; these read PTFT…IHVP and KAHG…NELV. N-linked (GlcNAc...) asparagine glycosylation is found at Asn55, Asn62, Asn70, Asn101, Asn118, Asn191, Asn198, Asn216, and Asn221. 2 disulfides stabilise this stretch: Cys89–Cys145 and Cys182–Cys240. A helical membrane pass occupies residues 255–283; that stretch reads LVVLSFLVPLKPFLAILAEVILLVAIILL. Residues 284–330 lie on the Cytoplasmic side of the membrane; the sequence is CEVYTHKKKNDPDAGKEFEQIEQLKSDDSNGIENNVPRYRKTDSADQ. The segment covering 293-311 has biased composition (basic and acidic residues); it reads NDPDAGKEFEQIEQLKSDD. The disordered stretch occupies residues 293 to 330; the sequence is NDPDAGKEFEQIEQLKSDDSNGIENNVPRYRKTDSADQ. Position 312 is a phosphoserine (Ser312).

In terms of assembly, interacts with SLC16A1, SLC16A6 and SLC16A7. As to expression, only member of the immunoglobulin superfamily to be expressed in embryonal carcinoma cells, which resemble multipotential cells of early embryos.

Its subcellular location is the cell membrane. It localises to the synapse. Functionally, plays a role in targeting the monocarboxylate transporters SLC16A1, SLC16A6 and SLC16A7 to the cell membrane. Plays a role in the outgrowth of motoneurons and in the formation of neuromuscular junctions. Following muscle denervation, promotes nerve terminal sprouting and the formation of additional acetylcholine receptor clusters at synaptic sites without affecting terminal Schwann cell number or morphology. Delays the retraction of terminal sprouts following re-innervation of denervated endplates. This chain is Embigin (Emb), found in Mus musculus (Mouse).